The sequence spans 150 residues: Large ribosomal subunit protein uL13 (150 aa).

The interval 127-150 (KGTEHPHSAQKPQPLQLNPSATAK) is disordered. A compositionally biased stretch (polar residues) spans 136 to 150 (QKPQPLQLNPSATAK).

The protein belongs to the universal ribosomal protein uL13 family. In terms of assembly, part of the 50S ribosomal subunit.

This protein is one of the early assembly proteins of the 50S ribosomal subunit, although it is not seen to bind rRNA by itself. It is important during the early stages of 50S assembly. This is Large ribosomal subunit protein uL13 from Synechococcus sp. (strain CC9902).